Here is a 158-residue protein sequence, read N- to C-terminus: Glutathione peroxidase homolog BsaA (158 aa).

Cysteine 36 is a catalytic residue.

The protein belongs to the glutathione peroxidase family.

This Staphylococcus aureus (strain COL) protein is Glutathione peroxidase homolog BsaA (bsaA).